The chain runs to 116 residues: MFIEVVKSKIHRVTVTEANLNYIGSITIDEDLLDAANLIANEKVSIVNNNNGERFETYIIKGERGSGVVCLNGAAARKAQPGDIIIVMSYAMMDFEEAKTFKPSVVFPDTATNKLI.

Ser25 (schiff-base intermediate with substrate; via pyruvic acid) is an active-site residue. At Ser25 the chain carries Pyruvic acid (Ser). Thr57 provides a ligand contact to substrate. Tyr58 (proton donor) is an active-site residue. 73 to 75 (GAA) is a binding site for substrate.

The protein belongs to the PanD family. In terms of assembly, heterooctamer of four alpha and four beta subunits. Pyruvate is required as a cofactor. In terms of processing, is synthesized initially as an inactive proenzyme, which is activated by self-cleavage at a specific serine bond to produce a beta-subunit with a hydroxyl group at its C-terminus and an alpha-subunit with a pyruvoyl group at its N-terminus.

It localises to the cytoplasm. It catalyses the reaction L-aspartate + H(+) = beta-alanine + CO2. The protein operates within cofactor biosynthesis; (R)-pantothenate biosynthesis; beta-alanine from L-aspartate: step 1/1. Its function is as follows. Catalyzes the pyruvoyl-dependent decarboxylation of aspartate to produce beta-alanine. This chain is Aspartate 1-decarboxylase, found in Parabacteroides distasonis (strain ATCC 8503 / DSM 20701 / CIP 104284 / JCM 5825 / NCTC 11152).